Consider the following 255-residue polypeptide: Small ribosomal subunit protein uS2 (255 aa).

The segment at Asp233–Lys255 is disordered.

This sequence belongs to the universal ribosomal protein uS2 family.

The polypeptide is Small ribosomal subunit protein uS2 (rpsB) (Lactococcus lactis subsp. lactis (strain IL1403) (Streptococcus lactis)).